Consider the following 498-residue polypeptide: Probable malate:quinone oxidoreductase (498 aa).

This sequence belongs to the MQO family. It depends on FAD as a cofactor.

The enzyme catalyses (S)-malate + a quinone = a quinol + oxaloacetate. Its pathway is carbohydrate metabolism; tricarboxylic acid cycle; oxaloacetate from (S)-malate (quinone route): step 1/1. The sequence is that of Probable malate:quinone oxidoreductase from Prochlorococcus marinus (strain AS9601).